The chain runs to 230 residues: Ribose-5-phosphate isomerase A (230 aa).

Substrate contacts are provided by residues 32-35 (TGST), 85-88 (DGAD), and 98-101 (KGGG). E107 acts as the Proton acceptor in catalysis. K125 contributes to the substrate binding site.

The protein belongs to the ribose 5-phosphate isomerase family. In terms of assembly, homodimer.

It catalyses the reaction aldehydo-D-ribose 5-phosphate = D-ribulose 5-phosphate. The protein operates within carbohydrate degradation; pentose phosphate pathway; D-ribose 5-phosphate from D-ribulose 5-phosphate (non-oxidative stage): step 1/1. Its function is as follows. Catalyzes the reversible conversion of ribose-5-phosphate to ribulose 5-phosphate. The chain is Ribose-5-phosphate isomerase A from Burkholderia ambifaria (strain MC40-6).